The primary structure comprises 174 residues: Methylated-DNA--protein-cysteine methyltransferase (174 aa).

Cys141 serves as the catalytic Nucleophile; methyl group acceptor.

This sequence belongs to the MGMT family.

Its subcellular location is the cytoplasm. The enzyme catalyses a 6-O-methyl-2'-deoxyguanosine in DNA + L-cysteinyl-[protein] = S-methyl-L-cysteinyl-[protein] + a 2'-deoxyguanosine in DNA. It carries out the reaction a 4-O-methyl-thymidine in DNA + L-cysteinyl-[protein] = a thymidine in DNA + S-methyl-L-cysteinyl-[protein]. Its function is as follows. Involved in the cellular defense against the biological effects of O6-methylguanine (O6-MeG) and O4-methylthymine (O4-MeT) in DNA. Repairs the methylated nucleobase in DNA by stoichiometrically transferring the methyl group to a cysteine residue in the enzyme. This is a suicide reaction: the enzyme is irreversibly inactivated. The sequence is that of Methylated-DNA--protein-cysteine methyltransferase from Thermococcus kodakarensis (strain ATCC BAA-918 / JCM 12380 / KOD1) (Pyrococcus kodakaraensis (strain KOD1)).